The chain runs to 73 residues: UPF0352 protein HSM_0097 (73 aa).

It belongs to the UPF0352 family.

The chain is UPF0352 protein HSM_0097 from Histophilus somni (strain 2336) (Haemophilus somnus).